We begin with the raw amino-acid sequence, 185 residues long: Auxin-responsive protein IAA34 (185 aa).

The short motif at 63 to 67 (LGLSL) is the EAR-like (transcriptional repression) element. A PB1 domain is found at 92-180 (WGYVKVTMDG…ERLRITRRND (89 aa)).

This sequence belongs to the Aux/IAA family. As to quaternary structure, homodimers and heterodimers.

The protein localises to the nucleus. Its function is as follows. Aux/IAA proteins are short-lived transcriptional factors that function as repressors of early auxin response genes at low auxin concentrations. Repression is thought to result from the interaction with auxin response factors (ARFs), proteins that bind to the auxin-responsive promoter element (AuxRE). Formation of heterodimers with ARF proteins may alter their ability to modulate early auxin response genes expression. This Arabidopsis thaliana (Mouse-ear cress) protein is Auxin-responsive protein IAA34 (IAA34).